Here is an 891-residue protein sequence, read N- to C-terminus: Bifunctional aldehyde-alcohol dehydrogenase AdhE (891 aa).

An aldehyde dehydrogenase region spans residues 2-440 (AVTNVAELNA…ENVGPKHLIN (439 aa)). NAD(+) contacts are provided by residues 110–115 (IVPTTN), Gly195, and Gly213. Cys246 functions as the Nucleophile in the catalytic mechanism. Residues Glu335 and Leu419 each coordinate NAD(+). Positions 441–448 (KKTVAKRA) are linker. The tract at residues 449-891 (ENMLWHKLPK…KAEKKAKKSA (443 aa)) is alcohol dehydrogenase. Residues Asp487, Asp519, 546–550 (GSPMD), 597–598 (TT), Val610, Lys619, and Leu638 contribute to the NAD(+) site. Asp653, His657, His723, and His737 together coordinate Fe cation.

This sequence in the N-terminal section; belongs to the aldehyde dehydrogenase family. In the C-terminal section; belongs to the iron-containing alcohol dehydrogenase family. In terms of assembly, forms long filaments, called spirosomes. Requires Fe(2+) as cofactor.

It carries out the reaction acetaldehyde + NAD(+) + CoA = acetyl-CoA + NADH + H(+). The catalysed reaction is ethanol + NAD(+) = acetaldehyde + NADH + H(+). It catalyses the reaction a primary alcohol + NAD(+) = an aldehyde + NADH + H(+). In terms of biological role, under fermentative conditions, catalyzes the sequential NADH-dependent reduction of acetyl-CoA to acetaldehyde and then to ethanol. Plays an important role in virulence and is critical for proper regulation of virulence gene expression. This Escherichia coli O157:H7 protein is Bifunctional aldehyde-alcohol dehydrogenase AdhE.